Reading from the N-terminus, the 220-residue chain is MRQKHYLEAAARGLHDSCPGQARYLLWAYTSSHDDKSTFEETCPYCFQLLVLDNSRVRLKPKARLTPKIQKLLNREARNYTLSFKEAKMVKKFKDSKSVLLITCKTCNRTVKHHGKSRSFVSTLKSNPATPTSKLSLKTPERRTANPNHDMSGSKGKSPASVFRTPTSGQSVSTCSSKNTSKTKKHFSQLKMLLSQNESQKIPKVDFRNFLSSLKGGLLK.

A disordered region spans residues 117-181 (SRSFVSTLKS…VSTCSSKNTS (65 aa)). A compositionally biased stretch (polar residues) spans 119-136 (SFVSTLKSNPATPTSKLS). Serine 126 carries the post-translational modification Phosphoserine. Phosphothreonine is present on residues threonine 130 and threonine 139. Positions 171-180 (SVSTCSSKNT) are enriched in low complexity.

This sequence belongs to the UPF0711 family.

This chain is UPF0711 protein C18orf21 (C18orf21), found in Homo sapiens (Human).